Consider the following 364-residue polypeptide: UDP-N-acetylglucosamine--N-acetylmuramyl-(pentapeptide) pyrophosphoryl-undecaprenol N-acetylglucosamine transferase (364 aa).

UDP-N-acetyl-alpha-D-glucosamine contacts are provided by residues 10 to 12 (TGG), N126, R167, S199, I253, and Q298.

It belongs to the glycosyltransferase 28 family. MurG subfamily.

It is found in the cell inner membrane. The catalysed reaction is di-trans,octa-cis-undecaprenyl diphospho-N-acetyl-alpha-D-muramoyl-L-alanyl-D-glutamyl-meso-2,6-diaminopimeloyl-D-alanyl-D-alanine + UDP-N-acetyl-alpha-D-glucosamine = di-trans,octa-cis-undecaprenyl diphospho-[N-acetyl-alpha-D-glucosaminyl-(1-&gt;4)]-N-acetyl-alpha-D-muramoyl-L-alanyl-D-glutamyl-meso-2,6-diaminopimeloyl-D-alanyl-D-alanine + UDP + H(+). It participates in cell wall biogenesis; peptidoglycan biosynthesis. Its function is as follows. Cell wall formation. Catalyzes the transfer of a GlcNAc subunit on undecaprenyl-pyrophosphoryl-MurNAc-pentapeptide (lipid intermediate I) to form undecaprenyl-pyrophosphoryl-MurNAc-(pentapeptide)GlcNAc (lipid intermediate II). The chain is UDP-N-acetylglucosamine--N-acetylmuramyl-(pentapeptide) pyrophosphoryl-undecaprenol N-acetylglucosamine transferase from Amoebophilus asiaticus (strain 5a2).